We begin with the raw amino-acid sequence, 112 residues long: Chaperone NapD (112 aa).

The protein belongs to the NapD family. In terms of assembly, interacts with the cytoplasmic NapA precursor.

It localises to the cytoplasm. Functionally, chaperone for NapA, the catalytic subunit of the periplasmic nitrate reductase. It binds directly and specifically to the twin-arginine signal peptide of NapA, preventing premature interaction with the Tat translocase and premature export. The chain is Chaperone NapD from Paracoccus pantotrophus (Thiosphaera pantotropha).